The sequence spans 201 residues: 3-isopropylmalate dehydratase small subunit 1 (201 aa).

The protein belongs to the LeuD family. LeuD type 1 subfamily. In terms of assembly, heterodimer of LeuC and LeuD.

It catalyses the reaction (2R,3S)-3-isopropylmalate = (2S)-2-isopropylmalate. The protein operates within amino-acid biosynthesis; L-leucine biosynthesis; L-leucine from 3-methyl-2-oxobutanoate: step 2/4. Functionally, catalyzes the isomerization between 2-isopropylmalate and 3-isopropylmalate, via the formation of 2-isopropylmaleate. The chain is 3-isopropylmalate dehydratase small subunit 1 from Salmonella typhimurium (strain LT2 / SGSC1412 / ATCC 700720).